Here is a 293-residue protein sequence, read N- to C-terminus: Elongation factor Ts (293 aa).

Residues 80 to 83 (TDFV) are involved in Mg(2+) ion dislocation from EF-Tu.

This sequence belongs to the EF-Ts family.

It is found in the cytoplasm. In terms of biological role, associates with the EF-Tu.GDP complex and induces the exchange of GDP to GTP. It remains bound to the aminoacyl-tRNA.EF-Tu.GTP complex up to the GTP hydrolysis stage on the ribosome. This Herminiimonas arsenicoxydans protein is Elongation factor Ts.